Consider the following 491-residue polypeptide: UDP-N-acetylmuramate--L-alanine ligase (491 aa).

126–132 provides a ligand contact to ATP; that stretch reads GTHGKTT.

The protein belongs to the MurCDEF family.

Its subcellular location is the cytoplasm. It catalyses the reaction UDP-N-acetyl-alpha-D-muramate + L-alanine + ATP = UDP-N-acetyl-alpha-D-muramoyl-L-alanine + ADP + phosphate + H(+). It functions in the pathway cell wall biogenesis; peptidoglycan biosynthesis. Functionally, cell wall formation. This Klebsiella pneumoniae (strain 342) protein is UDP-N-acetylmuramate--L-alanine ligase.